A 211-amino-acid polypeptide reads, in one-letter code: Cytochrome c biogenesis ATP-binding export protein CcmA (211 aa).

The 206-residue stretch at 6–211 (LQTVALACER…RDIDLGNWAV (206 aa)) folds into the ABC transporter domain. Residue 38–45 (GPNGSGKT) participates in ATP binding.

The protein belongs to the ABC transporter superfamily. CcmA exporter (TC 3.A.1.107) family. In terms of assembly, the complex is composed of two ATP-binding proteins (CcmA) and two transmembrane proteins (CcmB).

The protein resides in the cell inner membrane. The enzyme catalyses heme b(in) + ATP + H2O = heme b(out) + ADP + phosphate + H(+). Part of the ABC transporter complex CcmAB involved in the biogenesis of c-type cytochromes; once thought to export heme, this seems not to be the case, but its exact role is uncertain. Responsible for energy coupling to the transport system. This Pseudomonas fluorescens (strain Pf0-1) protein is Cytochrome c biogenesis ATP-binding export protein CcmA.